A 211-amino-acid chain; its full sequence is 3-demethoxyubiquinol 3-hydroxylase (211 aa).

6 residues coordinate Fe cation: Glu60, Glu90, His93, Glu142, Glu174, and His177.

Belongs to the COQ7 family. The cofactor is Fe cation.

The protein resides in the cell membrane. It catalyses the reaction a 5-methoxy-2-methyl-3-(all-trans-polyprenyl)benzene-1,4-diol + AH2 + O2 = a 3-demethylubiquinol + A + H2O. It participates in cofactor biosynthesis; ubiquinone biosynthesis. Functionally, catalyzes the hydroxylation of 2-nonaprenyl-3-methyl-6-methoxy-1,4-benzoquinol during ubiquinone biosynthesis. The chain is 3-demethoxyubiquinol 3-hydroxylase from Francisella tularensis subsp. holarctica (strain FTNF002-00 / FTA).